The following is a 234-amino-acid chain: Arsenate respiratory reductase iron-sulfur subunit ArrB (234 aa).

4Fe-4S ferredoxin-type domains follow at residues Leu-3–Ile-32, Val-48–Arg-79, and Gly-80–Ala-109. 16 residues coordinate [4Fe-4S] cluster: Cys-12, Cys-15, Cys-18, Cys-22, Cys-57, Cys-60, Cys-65, Cys-69, Cys-89, Cys-92, Cys-95, Cys-99, Cys-164, Cys-167, Cys-179, and Cys-183.

As to quaternary structure, heterodimer composed of one large subunit (ArrA) and one small subunit (ArrB). The cofactor is [4Fe-4S] cluster.

The protein resides in the periplasm. Phosphate is a competitive inhibitor. Component of the arsenate respiratory reductase (Arr) complex, which catalyzes the reduction of arsenate (As(V)) to arsenite (As(III)). ArrB is probably the electron transfer subunit. The periplasmic localization of this complex may allow the cell to couple arsenate reduction to energy production before arsenate can be transported to the cell cytoplasm and enter the ars detoxification pathway, an energy-requiring process. The polypeptide is Arsenate respiratory reductase iron-sulfur subunit ArrB (Shewanella sp. (strain ANA-3)).